We begin with the raw amino-acid sequence, 276 residues long: Urease accessory protein UreD (276 aa).

Belongs to the UreD family. As to quaternary structure, ureD, UreF and UreG form a complex that acts as a GTP-hydrolysis-dependent molecular chaperone, activating the urease apoprotein by helping to assemble the nickel containing metallocenter of UreC. The UreE protein probably delivers the nickel.

The protein localises to the cytoplasm. Required for maturation of urease via the functional incorporation of the urease nickel metallocenter. The sequence is that of Urease accessory protein UreD from Verminephrobacter eiseniae (strain EF01-2).